The primary structure comprises 598 residues: Aspartate--tRNA(Asp/Asn) ligase (598 aa).

Residue Glu-177 participates in L-aspartate binding. Positions 201–204 are aspartate; that stretch reads QIFK. Residues Arg-223 and His-451 each coordinate L-aspartate. 223–225 is an ATP binding site; the sequence is RDE. Glu-485 serves as a coordination point for ATP. An L-aspartate-binding site is contributed by Arg-492. An ATP-binding site is contributed by 537–540; that stretch reads GVDR.

This sequence belongs to the class-II aminoacyl-tRNA synthetase family. Type 1 subfamily. Homodimer.

Its subcellular location is the cytoplasm. It catalyses the reaction tRNA(Asx) + L-aspartate + ATP = L-aspartyl-tRNA(Asx) + AMP + diphosphate. Functionally, aspartyl-tRNA synthetase with relaxed tRNA specificity since it is able to aspartylate not only its cognate tRNA(Asp) but also tRNA(Asn). Reaction proceeds in two steps: L-aspartate is first activated by ATP to form Asp-AMP and then transferred to the acceptor end of tRNA(Asp/Asn). The polypeptide is Aspartate--tRNA(Asp/Asn) ligase (Anaplasma phagocytophilum (strain HZ)).